Reading from the N-terminus, the 265-residue chain is Mlc titration factor A (265 aa).

Zn(2+)-binding residues include histidine 111, histidine 148, histidine 152, and glutamate 211.

Belongs to the MtfA family. In terms of assembly, interacts with Mlc with high affinity. It depends on Zn(2+) as a cofactor.

It is found in the cytoplasm. Its activity is regulated as follows. Proteolytic activity is stimulated by interaction with Mlc. Addition of the chelators EDTA or phenanthroline significantly reduces the peptidase activity, whereas the addition of other protease inhibitors has much less effect. Its function is as follows. Involved in the modulation of the activity of the glucose-phosphotransferase system (glucose-PTS). Interacts with the transcriptional repressor Mlc, preventing its interaction with DNA and leading to the modulation of expression of genes regulated by Mlc, including ptsG, which encodes the PTS system glucose-specific EIICB component. Shows zinc-dependent metallopeptidase activity. In vitro, can cleave several artificial substrates. The greatest activity and specificity is observed for L-alanine fused to 4-nitroanilide (L-alanine-pNA). Shows significantly lower activity towards L-arginine-pNA, L-proline-pNA, hippuryl-L-phenylalanine and hippuryl-L-arginine, and cannot use FTC-casein. Mlc does not appear to be a biologically relevant peptidase substrate. Biologically relevant targets may have a function in growth transition under changing environmental conditions. The chain is Mlc titration factor A from Escherichia coli (strain K12).